Here is a 451-residue protein sequence, read N- to C-terminus: uncharacterized protein (451 aa).

The 59-residue stretch at 1 to 59 folds into the TRAM domain; it reads MLHKNDIIETEISDISHEGMGIAKVDGFVFFVENALPGEIIKMRVLKLRKRIGYGKVEE. S-adenosyl-L-methionine contacts are provided by glutamine 283, tyrosine 312, glutamate 333, and aspartate 381. The active-site Nucleophile is cysteine 408.

This sequence belongs to the class I-like SAM-binding methyltransferase superfamily. RNA M5U methyltransferase family.

This is an uncharacterized protein from Streptococcus agalactiae serotype V (strain ATCC BAA-611 / 2603 V/R).